Reading from the N-terminus, the 387-residue chain is 1-deoxy-D-xylulose 5-phosphate reductoisomerase (387 aa).

Residues T10, G11, I13, N38, and N122 each coordinate NADPH. 1-deoxy-D-xylulose 5-phosphate is bound at residue K123. E124 is an NADPH binding site. D148 serves as a coordination point for Mn(2+). 4 residues coordinate 1-deoxy-D-xylulose 5-phosphate: S149, E150, S174, and H197. E150 is a Mn(2+) binding site. G203 is a binding site for NADPH. 4 residues coordinate 1-deoxy-D-xylulose 5-phosphate: S210, N215, K216, and E219. E219 is a Mn(2+) binding site.

Belongs to the DXR family. Mg(2+) is required as a cofactor. Mn(2+) serves as cofactor.

It carries out the reaction 2-C-methyl-D-erythritol 4-phosphate + NADP(+) = 1-deoxy-D-xylulose 5-phosphate + NADPH + H(+). The protein operates within isoprenoid biosynthesis; isopentenyl diphosphate biosynthesis via DXP pathway; isopentenyl diphosphate from 1-deoxy-D-xylulose 5-phosphate: step 1/6. Catalyzes the NADPH-dependent rearrangement and reduction of 1-deoxy-D-xylulose-5-phosphate (DXP) to 2-C-methyl-D-erythritol 4-phosphate (MEP). The chain is 1-deoxy-D-xylulose 5-phosphate reductoisomerase from Ehrlichia ruminantium (strain Gardel).